The following is a 90-amino-acid chain: Small ribosomal subunit protein uS15c (90 aa).

This sequence belongs to the universal ribosomal protein uS15 family. As to quaternary structure, part of the 30S ribosomal subunit.

The protein resides in the plastid. The protein localises to the chloroplast. In Morus indica (Mulberry), this protein is Small ribosomal subunit protein uS15c (rps15).